Consider the following 222-residue polypeptide: Ras-related protein Rab-21 (222 aa).

N-acetylalanine is present on alanine 2. Positions 26, 29, 30, 31, 32, 43, 44, 46, 48, and 49 each coordinate GTP. Residue threonine 31 coordinates Mg(2+). The short motif at lysine 41–phenylalanine 54 is the Switch 1 element. Residues threonine 49 and aspartate 72 each coordinate Mg(2+). The Switch 2 signature appears at alanine 74–glycine 92. GTP contacts are provided by glycine 75, asparagine 130, lysine 131, aspartate 133, alanine 161, and lysine 162. Residues cysteine 218 and cysteine 219 are each lipidated (S-geranylgeranyl cysteine). Cysteine 219 is subject to Cysteine methyl ester. The propeptide at serine 220–glycine 222 is removed in mature form.

It belongs to the small GTPase superfamily. Rab family. In terms of assembly, interacts with the cytoplasmic tail of integrins ITGA1, ITGA2, ITGA5, ITGA6, ITGA11 and ITGB1; this interaction is dependent upon its GDP/GTP cycle. Interacts with RABGEF1 (via VPS9 domain). Interacts with ANKRD27. Interacts with VAMP7. Interacts (in GTP-bound form) with VAMP8 in response to starvation; the interaction probably regulates VAMP8 endolysosomal trafficking. Interacts (active GTP-bound form) with TMED10; the interaction is indirect and regulates TMED10 abundance and localization at the Golgi. Mg(2+) is required as a cofactor.

The protein localises to the endoplasmic reticulum membrane. Its subcellular location is the golgi apparatus. The protein resides in the trans-Golgi network. It is found in the golgi apparatus membrane. It localises to the early endosome membrane. The protein localises to the cytoplasmic vesicle membrane. Its subcellular location is the cleavage furrow. The protein resides in the cell projection. It is found in the neuron projection. It catalyses the reaction GTP + H2O = GDP + phosphate + H(+). Its activity is regulated as follows. Regulated by guanine nucleotide exchange factors (GEFs) including ANKRD27 and RABGEF1, which promote the exchange of bound GDP for free GTP. Regulated by GTPase activating proteins (GAPs) which increase the GTP hydrolysis activity. Inhibited by GDP dissociation inhibitors (GDIs). The small GTPases Rab are key regulators of intracellular membrane trafficking, from the formation of transport vesicles to their fusion with membranes. Rabs cycle between an inactive GDP-bound form and an active GTP-bound form that is able to recruit to membranes different sets of downstream effectors directly responsible for vesicle formation, movement, tethering and fusion. RAB21 is involved in membrane trafficking control. Regulates integrin internalization and recycling, but does not influence the traffic of endosomally translocated receptors in general. As a result, may regulate cell adhesion and migration. During the mitosis of adherent cells, controls the endosomal trafficking of integrins which is required for the successful completion of cytokinesis. Involved in neurite growth. Following SBF2/MTMT13-mediated activation in response to starvation-induced autophagy, binds to and regulates SNARE protein VAMP8 endolysosomal transport required for SNARE-mediated autophagosome-lysosome fusion. Modulates protein levels of the cargo receptors TMED2 and TMED10, and required for appropriate Golgi localization of TMED10. The protein is Ras-related protein Rab-21 of Mus musculus (Mouse).